The chain runs to 152 residues: MFP1 attachment factor 1 (152 aa).

Disordered stretches follow at residues 1–33 (MAEIDSAQSQETVTQETQNKPMTTSFSIWPPTQ) and 107–152 (DTVK…ETEP). The tract at residues 12 to 115 (TVTQETQNKP…IDTVKSRSAP (104 aa)) is WPP. The segment covering 134–152 (EPSSASGLTGEVSSVETEP) has biased composition (polar residues).

As to quaternary structure, interacts with WAP through its WPP domain. Binds to MFP1 and FPP proteins. Expressed in young tomato leaves, young fruits, and flowers (at protein level).

The protein resides in the nucleus envelope. It localises to the cytoplasm. The protein localises to the golgi apparatus. Its subcellular location is the nucleus. It is found in the nucleus matrix. The protein is MFP1 attachment factor 1 (MAF1) of Solanum lycopersicum (Tomato).